A 391-amino-acid polypeptide reads, in one-letter code: D-gluconate/D-galactonate dehydratase (391 aa).

Position 198 (E198) interacts with Mg(2+). H200 serves as the catalytic Proton donor. Mg(2+)-binding residues include E224 and E250. The Proton acceptor role is filled by H300.

It belongs to the mandelate racemase/muconate lactonizing enzyme family. GaD subfamily. Homooctamer. The cofactor is Mg(2+).

The enzyme catalyses D-gluconate = 2-dehydro-3-deoxy-D-gluconate + H2O. It carries out the reaction D-galactonate = 2-dehydro-3-deoxy-D-galactonate + H2O. It functions in the pathway carbohydrate acid metabolism; D-gluconate degradation. Its function is as follows. Involved in the degradation of glucose and galactose via the nonphosphorylative variant of Entner-Doudoroff pathway. Catalyzes the dehydration of gluconate to produce 2-keto-3-deoxygluconate (KDG). It is also able to catalyze the dehydration of galactonate to produce 2-keto-3-deoxygalactonate (KDGal). The protein is D-gluconate/D-galactonate dehydratase of Picrophilus torridus (strain ATCC 700027 / DSM 9790 / JCM 10055 / NBRC 100828 / KAW 2/3).